The chain runs to 319 residues: Sulfate adenylyltransferase subunit 2 (319 aa).

Disordered stretches follow at residues 1-22 (MNPGRGGAYAAGRDGTRGTRRP) and 296-319 (RGATRADDKLSEAAMEDRKREGYF).

Belongs to the PAPS reductase family. CysD subfamily.

The enzyme catalyses sulfate + ATP + H(+) = adenosine 5'-phosphosulfate + diphosphate. It participates in antibiotic biosynthesis; mitomycin C biosynthesis. With CysN forms the ATP sulfurylase (ATPS) that catalyzes the adenylation of sulfate producing adenosine 5'-phosphosulfate (APS) and diphosphate, the first enzymatic step in sulfur assimilation pathway. APS synthesis involves the formation of a high-energy phosphoric-sulfuric acid anhydride bond driven by GTP hydrolysis by CysN coupled to ATP hydrolysis by CysD. The chain is Sulfate adenylyltransferase subunit 2 (mmcV) from Streptomyces lavendulae.